Reading from the N-terminus, the 288-residue chain is Homoserine kinase (288 aa).

79 to 89 is an ATP binding site; it reads PPARGLGSSSA.

The protein belongs to the GHMP kinase family. Homoserine kinase subfamily.

It localises to the cytoplasm. The catalysed reaction is L-homoserine + ATP = O-phospho-L-homoserine + ADP + H(+). Its pathway is amino-acid biosynthesis; L-threonine biosynthesis; L-threonine from L-aspartate: step 4/5. Its function is as follows. Catalyzes the ATP-dependent phosphorylation of L-homoserine to L-homoserine phosphate. The chain is Homoserine kinase from Listeria monocytogenes serovar 1/2a (strain ATCC BAA-679 / EGD-e).